The chain runs to 396 residues: Maltose/maltodextrin-binding periplasmic protein (396 aa).

An N-terminal signal peptide occupies residues 1 to 26; sequence MKIKTGARILALSALTTMMFSASALA.

This sequence belongs to the bacterial solute-binding protein 1 family. In terms of assembly, the complex is composed of two ATP-binding proteins (MalK), two transmembrane proteins (MalG and MalF) and a solute-binding protein (MalE).

It localises to the periplasm. Its function is as follows. Part of the ABC transporter complex MalEFGK involved in maltose/maltodextrin import. Binds maltose and higher maltodextrins. This Klebsiella aerogenes (Enterobacter aerogenes) protein is Maltose/maltodextrin-binding periplasmic protein (malE).